The primary structure comprises 444 residues: 23S rRNA (uracil(1939)-C(5))-methyltransferase RlmD (444 aa).

Residues 5-64 (KPKLNLTSQTARIVNLSHDGRGIARVNGKATFIQGALPGEVVEFQYTRIKKDFDEGKLLS) enclose the TRAM domain. Cysteine 77, cysteine 83, cysteine 86, and cysteine 166 together coordinate [4Fe-4S] cluster. The S-adenosyl-L-methionine site is built by glutamine 276, phenylalanine 305, asparagine 310, glutamate 326, asparagine 353, and aspartate 374. Cysteine 400 acts as the Nucleophile in catalysis.

This sequence belongs to the class I-like SAM-binding methyltransferase superfamily. RNA M5U methyltransferase family. RlmD subfamily.

The enzyme catalyses uridine(1939) in 23S rRNA + S-adenosyl-L-methionine = 5-methyluridine(1939) in 23S rRNA + S-adenosyl-L-homocysteine + H(+). Functionally, catalyzes the formation of 5-methyl-uridine at position 1939 (m5U1939) in 23S rRNA. The chain is 23S rRNA (uracil(1939)-C(5))-methyltransferase RlmD from Legionella pneumophila (strain Corby).